The following is a 217-amino-acid chain: Translation initiation factor IF-3 (217 aa).

Positions 179–217 (PRKTPLVKKEEKEAAPTKAVRTIPAPPRPTAAKVAAQQA) are disordered.

The protein belongs to the IF-3 family. Monomer.

The protein localises to the cytoplasm. Functionally, IF-3 binds to the 30S ribosomal subunit and shifts the equilibrium between 70S ribosomes and their 50S and 30S subunits in favor of the free subunits, thus enhancing the availability of 30S subunits on which protein synthesis initiation begins. The sequence is that of Translation initiation factor IF-3 from Parasynechococcus marenigrum (strain WH8102).